Reading from the N-terminus, the 105-residue chain is Flagellar transcriptional regulator FlhD (105 aa).

This sequence belongs to the FlhD family. Homodimer; disulfide-linked. Forms a heterohexamer composed of two FlhC and four FlhD subunits. Each FlhC binds a FlhD dimer, forming a heterotrimer, and a hexamer assembles by dimerization of two heterotrimers.

The protein localises to the cytoplasm. Functionally, functions in complex with FlhC as a master transcriptional regulator that regulates transcription of several flagellar and non-flagellar operons by binding to their promoter region. Activates expression of class 2 flagellar genes, including fliA, which is a flagellum-specific sigma factor that turns on the class 3 genes. Also regulates genes whose products function in a variety of physiological pathways. This chain is Flagellar transcriptional regulator FlhD, found in Ralstonia nicotianae (strain ATCC BAA-1114 / GMI1000) (Ralstonia solanacearum).